The sequence spans 590 residues: Phosphomethylpyrimidine synthase (590 aa).

Substrate-binding positions include Asn197, Met226, Tyr255, His291, 311–313 (SRG), 352–355 (DGLR), and Glu391. His395 contacts Zn(2+). Tyr418 serves as a coordination point for substrate. His459 lines the Zn(2+) pocket. Positions 539, 542, and 547 each coordinate [4Fe-4S] cluster.

This sequence belongs to the ThiC family. [4Fe-4S] cluster is required as a cofactor.

The enzyme catalyses 5-amino-1-(5-phospho-beta-D-ribosyl)imidazole + S-adenosyl-L-methionine = 4-amino-2-methyl-5-(phosphooxymethyl)pyrimidine + CO + 5'-deoxyadenosine + formate + L-methionine + 3 H(+). Its pathway is cofactor biosynthesis; thiamine diphosphate biosynthesis. In terms of biological role, catalyzes the synthesis of the hydroxymethylpyrimidine phosphate (HMP-P) moiety of thiamine from aminoimidazole ribotide (AIR) in a radical S-adenosyl-L-methionine (SAM)-dependent reaction. The chain is Phosphomethylpyrimidine synthase from Bacillus subtilis (strain 168).